The primary structure comprises 856 residues: Nuclear valosin-containing protein-like (856 aa).

The interval 1-220 (MKPRPAGFVD…SLLESDMKRK (220 aa)) is interaction with RPL5. Residues 49 to 52 (RRKR) carry the Nucleolar localization signal motif. Position 70 is an N6-acetyllysine (lysine 70). The disordered stretch occupies residues 84–175 (AKRARQGEED…AKDSEGGWFI (92 aa)). The Nuclear localization signal motif lies at 85–88 (KRAR). Acidic residues predominate over residues 92–111 (EDNEYTESYSDDDSSMEDYP). Polar residues-rich tracts occupy residues 114 to 124 (QSANHMNSSLL) and 133 to 158 (DSVS…SKTG). Serine 134 is modified (phosphoserine). Threonine 138 carries the phosphothreonine modification. An N6-acetyllysine modification is found at lysine 156. Serine 191 carries the phosphoserine modification. The segment at 197-236 (PKKPITEIQDSKDSSLLESDMKRKGKLKNKGSKRKKEDLQ) is disordered. Over residues 205–218 (QDSKDSSLLESDMK) the composition is skewed to basic and acidic residues. Lysine 208 participates in a covalent cross-link: Glycyl lysine isopeptide (Lys-Gly) (interchain with G-Cter in SUMO2). Residues serine 211 and serine 215 each carry the phosphoserine modification. A Nuclear localization signal motif is present at residues 218–232 (KRKGKLKNKGSKRKK). Residues 219–230 (RKGKLKNKGSKR) are compositionally biased toward basic residues. The interval 267–474 (VGGNDMTLKE…LTPGFVGADL (208 aa)) is interaction with WDR74. 305–312 (GPPGCGKT) contacts ATP. Positions 496 to 523 (QQKKNPEMEDLPSKGVQEERLGTEPTSE) are disordered. 622 to 629 (GPPGCGKT) contributes to the ATP binding site.

Belongs to the AAA ATPase family. As to quaternary structure, interacts with NCL/nucleolin. Isoform 1 and isoform 2 interact with TERT and isoform 1 exhibits a higher binding affinity for TERT compared to isoform 2. Isoform 1 interacts with MTREX in an ATP-dependent manner; the interaction is required to associate NVL with nuclear RNA exosome. Isoform 1 interacts with RPL5 in an ATP-dependent manner. Interacts with WDR74 (through WDR repeats); the interaction is independent of RNA or pre-60S ribosome particles. As to expression, widely expressed. Highest level of expression in heart, placenta, skeletal muscle, pancreas and retina.

The protein localises to the nucleus. The protein resides in the nucleoplasm. It localises to the nucleolus. Its function is as follows. Participates in the assembly of the telomerase holoenzyme and effecting of telomerase activity via its interaction with TERT. Involved in both early and late stages of the pre-rRNA processing pathways. Spatiotemporally regulates 60S ribosomal subunit biogenesis in the nucleolus. Catalyzes the release of specific assembly factors, such as WDR74, from pre-60S ribosomal particles through the ATPase activity. In Homo sapiens (Human), this protein is Nuclear valosin-containing protein-like.